A 787-amino-acid polypeptide reads, in one-letter code: Endonuclease MutS2 (787 aa).

Position 334–341 (334–341 (GPNTGGKT)) interacts with ATP. Residues 712–787 (LDLRGKRYEE…GNGATIVTFK (76 aa)) enclose the Smr domain.

It belongs to the DNA mismatch repair MutS family. MutS2 subfamily. In terms of assembly, homodimer. Binds to stalled ribosomes, contacting rRNA.

In terms of biological role, endonuclease that is involved in the suppression of homologous recombination and thus may have a key role in the control of bacterial genetic diversity. Its function is as follows. Acts as a ribosome collision sensor, splitting the ribosome into its 2 subunits. Detects stalled/collided 70S ribosomes which it binds and splits by an ATP-hydrolysis driven conformational change. Acts upstream of the ribosome quality control system (RQC), a ribosome-associated complex that mediates the extraction of incompletely synthesized nascent chains from stalled ribosomes and their subsequent degradation. Probably generates substrates for RQC. The protein is Endonuclease MutS2 of Latilactobacillus sakei subsp. sakei (strain 23K) (Lactobacillus sakei subsp. sakei).